A 126-amino-acid chain; its full sequence is uncharacterized protein (126 aa).

A disordered region spans residues 13-45 (VAPKAGREEEQPPPPAGLGCGARGEPGRGPLEH).

It localises to the cytoplasm. The protein localises to the cytoskeleton. Its subcellular location is the cilium basal body. This is an uncharacterized protein from Homo sapiens (Human).